The primary structure comprises 457 residues: ATP synthase subunit beta (457 aa).

147–154 (GGAGVGKT) is a binding site for ATP.

Belongs to the ATPase alpha/beta chains family. F-type ATPases have 2 components, CF(1) - the catalytic core - and CF(0) - the membrane proton channel. CF(1) has five subunits: alpha(3), beta(3), gamma(1), delta(1), epsilon(1). CF(0) has three main subunits: a(1), b(2) and c(9-12). The alpha and beta chains form an alternating ring which encloses part of the gamma chain. CF(1) is attached to CF(0) by a central stalk formed by the gamma and epsilon chains, while a peripheral stalk is formed by the delta and b chains.

Its subcellular location is the cell inner membrane. It carries out the reaction ATP + H2O + 4 H(+)(in) = ADP + phosphate + 5 H(+)(out). In terms of biological role, produces ATP from ADP in the presence of a proton gradient across the membrane. The catalytic sites are hosted primarily by the beta subunits. The sequence is that of ATP synthase subunit beta from Actinobacillus pleuropneumoniae serotype 5b (strain L20).